Consider the following 250-residue polypeptide: DNA repair protein RecO (250 aa).

Belongs to the RecO family.

Functionally, involved in DNA repair and RecF pathway recombination. This is DNA repair protein RecO from Thermodesulfovibrio yellowstonii (strain ATCC 51303 / DSM 11347 / YP87).